Reading from the N-terminus, the 250-residue chain is Cytochrome c oxidase subunit 2 (250 aa).

At 1–27 (MGLLFNNLIMNFDAPSPWGIYFQDSAT) the chain is on the mitochondrial intermembrane side. Residues 28-61 (PQMEGLVELHDNIMYYLVVILFGVGWILLSIIRN) traverse the membrane as a helical segment. The Mitochondrial matrix segment spans residues 62–77 (YISTKSPISHKYLNHG). A helical membrane pass occupies residues 78-107 (TLIELIWTITPAVILILIAFPSFKLLYLMD). Over 108–250 (EVSDPSMSVL…EKFLTWLEEQ (143 aa)) the chain is Mitochondrial intermembrane. Cu cation is bound by residues histidine 185, cysteine 220, glutamate 222, cysteine 224, histidine 228, and methionine 231. Glutamate 222 is a Mg(2+) binding site.

It belongs to the cytochrome c oxidase subunit 2 family. As to quaternary structure, component of the cytochrome c oxidase (complex IV, CIV), a multisubunit enzyme composed of 11 subunits. The complex is composed of a catalytic core of 3 subunits Cox1, Cox2 and Cox3, encoded in the mitochondrial DNA, and 8 supernumerary subunits Cox4, Cox5a/Cox5, Cox6, Cox7, Cox8, Cox7a/Cox9, Cox6b/Cox12 and Cox6a/Cox13, which are encoded in the nuclear genome. The complex exists as a monomer or a dimer and forms respiratory supercomplexes (SCs) in the inner mitochondrial membrane with NADH-ubiquinone oxidoreductase (complex I, CI) and ubiquinol-cytochrome c oxidoreductase (cytochrome b-c1 complex, complex III, CIII), resulting in various different assemblies (supercomplexes I(1)IV(1), I(1)III(3)IV(2), III(2)IV(1) and III(2)IV(2) as well as larger supercomplexes of compositions like I(1)III(2)IV(5-6)). It depends on Cu cation as a cofactor.

It is found in the mitochondrion inner membrane. It catalyses the reaction 4 Fe(II)-[cytochrome c] + O2 + 8 H(+)(in) = 4 Fe(III)-[cytochrome c] + 2 H2O + 4 H(+)(out). In terms of biological role, component of the cytochrome c oxidase, the last enzyme in the mitochondrial electron transport chain which drives oxidative phosphorylation. The respiratory chain contains 3 multisubunit complexes succinate dehydrogenase (complex II, CII), ubiquinol-cytochrome c oxidoreductase (cytochrome b-c1 complex, complex III, CIII) and cytochrome c oxidase (complex IV, CIV), that cooperate to transfer electrons derived from NADH and succinate to molecular oxygen, creating an electrochemical gradient over the inner membrane that drives transmembrane transport and the ATP synthase. Cytochrome c oxidase is the component of the respiratory chain that catalyzes the reduction of oxygen to water. Electrons originating from reduced cytochrome c in the intermembrane space (IMS) are transferred via the dinuclear copper A center (CU(A)) of Cox2 and heme A of Cox1 to the active site in Cox1, a binuclear center (BNC) formed by heme A3 and copper B (CU(B)). The BNC reduces molecular oxygen to 2 water molecules using 4 electrons from cytochrome c in the IMS and 4 protons from the mitochondrial matrix. The sequence is that of Cytochrome c oxidase subunit 2 (cox-2) from Neurospora crassa (strain ATCC 24698 / 74-OR23-1A / CBS 708.71 / DSM 1257 / FGSC 987).